The following is a 290-amino-acid chain: Endoplasmic reticulum-Golgi intermediate compartment protein 1 (290 aa).

Residues 1 to 26 are Cytoplasmic-facing; the sequence is MPFDFRRFDIYRKVPKDLTQPTYTGA. Residues 27–47 traverse the membrane as a helical segment; sequence IISICCCLFILFLFLSELTGF. At 48 to 254 the chain is on the lumenal side; it reads ITTEVVNELY…RRQPLYRFIT (207 aa). The N-linked (GlcNAc...) asparagine glycan is linked to Asn-74. The helical transmembrane segment at 255-275 threads the bilayer; the sequence is TICAIIGGTFTVAGILDSCIF. The Cytoplasmic portion of the chain corresponds to 276 to 290; that stretch reads TASEAWKKIQLGKMH.

This sequence belongs to the ERGIC family. As to quaternary structure, may form a heteromeric complex composed of ERGIC1, ERGIC2 and ERGIC3. Within the complex, the interaction with ERGIC3 is direct. Interacts with ERGIC3/ERV46. Post-translationally, N-glycosylated.

It is found in the endoplasmic reticulum membrane. It localises to the endoplasmic reticulum-Golgi intermediate compartment membrane. Its subcellular location is the golgi apparatus membrane. In terms of biological role, possible role in transport between endoplasmic reticulum and Golgi. In Homo sapiens (Human), this protein is Endoplasmic reticulum-Golgi intermediate compartment protein 1 (ERGIC1).